We begin with the raw amino-acid sequence, 195 residues long: Imidazoleglycerol-phosphate dehydratase (195 aa).

It belongs to the imidazoleglycerol-phosphate dehydratase family.

It is found in the cytoplasm. The enzyme catalyses D-erythro-1-(imidazol-4-yl)glycerol 3-phosphate = 3-(imidazol-4-yl)-2-oxopropyl phosphate + H2O. Its pathway is amino-acid biosynthesis; L-histidine biosynthesis; L-histidine from 5-phospho-alpha-D-ribose 1-diphosphate: step 6/9. The polypeptide is Imidazoleglycerol-phosphate dehydratase (Campylobacter curvus (strain 525.92)).